The sequence spans 313 residues: Protein FixB (313 aa).

255–283 (LYLAVGISGQIQHMVGANASQTIFAINKD) serves as a coordination point for FAD.

This sequence belongs to the ETF alpha-subunit/FixB family. Heterodimer of FixA and FixB.

Its pathway is amine and polyamine metabolism; carnitine metabolism. Required for anaerobic carnitine reduction. May bring reductant to CaiA. This is Protein FixB from Escherichia coli O139:H28 (strain E24377A / ETEC).